The chain runs to 295 residues: Bifunctional protein FolD (295 aa).

Residues 166-168 (GRS), Ser-191, and Ile-232 each bind NADP(+).

It belongs to the tetrahydrofolate dehydrogenase/cyclohydrolase family. In terms of assembly, homodimer.

It catalyses the reaction (6R)-5,10-methylene-5,6,7,8-tetrahydrofolate + NADP(+) = (6R)-5,10-methenyltetrahydrofolate + NADPH. The enzyme catalyses (6R)-5,10-methenyltetrahydrofolate + H2O = (6R)-10-formyltetrahydrofolate + H(+). Its pathway is one-carbon metabolism; tetrahydrofolate interconversion. In terms of biological role, catalyzes the oxidation of 5,10-methylenetetrahydrofolate to 5,10-methenyltetrahydrofolate and then the hydrolysis of 5,10-methenyltetrahydrofolate to 10-formyltetrahydrofolate. This is Bifunctional protein FolD from Rhodopseudomonas palustris (strain BisB5).